We begin with the raw amino-acid sequence, 36 residues long: Photosystem I reaction center subunit VIII (36 aa).

Residues 1–21 (MITFSFPSIFVPLVGLVFPAI) form a helical membrane-spanning segment.

This sequence belongs to the PsaI family.

Its subcellular location is the plastid. It localises to the chloroplast thylakoid membrane. In terms of biological role, may help in the organization of the PsaL subunit. The protein is Photosystem I reaction center subunit VIII of Coffea arabica (Arabian coffee).